Here is a 330-residue protein sequence, read N- to C-terminus: FKBP12-interacting protein of 37 kDa (330 aa).

At methionine 1 the chain carries N-acetylmethionine. Acidic residues predominate over residues 1–12 (MEFSSQDDDFGG). Residues 1 to 43 (MEFSSQDDDFGGDDSAANATRASGNRRSFGDLEDDEDDIFGST) are disordered. Residues 17-26 (ANATRASGNR) are compositionally biased toward polar residues. Residues 56-308 (SLRGSLKNCK…KGLEIVSELV (253 aa)) adopt a coiled-coil conformation.

This sequence belongs to the fl(2)d family. As to quaternary structure, forms homodimers. Interacts with MTA/EMB1706. Interacts with FKBP12; interaction is inhibited by the immunosuppressive drug FK506. Interacts with VIR. Associates with MTA, MTB, VIR and HAKAI to form the m6A writer complex which is essential for adenosine methylation at specific mRNA sequences. As to expression, ubiquitously expressed with higher levels in primary and lateral roots, leaves, trichomes, and in pollen grains (at protein level).

The protein resides in the nucleus speckle. Its subcellular location is the nucleus. It is found in the nucleoplasm. Probable regulatory subunit of the N6-methyltransferase complex, a multiprotein complex that mediates N6-methyladenosine (m6A) methylation at the 5'-[AG]GAC-3' consensus sites of some mRNAs. Associates with MTA, MTB, VIR and HAKAI to form the m6A writer complex which is essential for adenosine methylation at specific mRNA sequences. N6-methyladenosine (m6A) plays a role in mRNA stability, processing, translation efficiency and editing. Essential protein required during endosperm development and embryogenesis. Involved in endoreduplication, especially in trichomes. May play a role in splicing events. This is FKBP12-interacting protein of 37 kDa from Arabidopsis thaliana (Mouse-ear cress).